The chain runs to 467 residues: ATP synthase subunit beta (467 aa).

156-163 (GGAGVGKT) lines the ATP pocket.

It belongs to the ATPase alpha/beta chains family. F-type ATPases have 2 components, CF(1) - the catalytic core - and CF(0) - the membrane proton channel. CF(1) has five subunits: alpha(3), beta(3), gamma(1), delta(1), epsilon(1). CF(0) has three main subunits: a(1), b(2) and c(9-12). The alpha and beta chains form an alternating ring which encloses part of the gamma chain. CF(1) is attached to CF(0) by a central stalk formed by the gamma and epsilon chains, while a peripheral stalk is formed by the delta and b chains.

Its subcellular location is the cell inner membrane. It carries out the reaction ATP + H2O + 4 H(+)(in) = ADP + phosphate + 5 H(+)(out). In terms of biological role, produces ATP from ADP in the presence of a proton gradient across the membrane. The catalytic sites are hosted primarily by the beta subunits. This is ATP synthase subunit beta from Cupriavidus taiwanensis (strain DSM 17343 / BCRC 17206 / CCUG 44338 / CIP 107171 / LMG 19424 / R1) (Ralstonia taiwanensis (strain LMG 19424)).